The following is a 193-amino-acid chain: Probable GTP-binding protein EngB (193 aa).

The EngB-type G domain occupies 22-193 (LLPEVALAGR…AAWEAIYRHL (172 aa)). Residues 30-37 (GRSNVGKS), 57-61 (GKTQT), 75-78 (DVPG), 142-145 (TKLD), and 174-176 (FSS) contribute to the GTP site. Residues Ser-37 and Thr-59 each contribute to the Mg(2+) site.

The protein belongs to the TRAFAC class TrmE-Era-EngA-EngB-Septin-like GTPase superfamily. EngB GTPase family. Mg(2+) serves as cofactor.

Necessary for normal cell division and for the maintenance of normal septation. In Exiguobacterium sibiricum (strain DSM 17290 / CCUG 55495 / CIP 109462 / JCM 13490 / 255-15), this protein is Probable GTP-binding protein EngB.